A 137-amino-acid chain; its full sequence is Nucleoside diphosphate kinase (137 aa).

ATP contacts are provided by lysine 9, phenylalanine 57, arginine 85, threonine 91, arginine 102, and asparagine 112. Histidine 115 acts as the Pros-phosphohistidine intermediate in catalysis.

Belongs to the NDK family. As to quaternary structure, homotetramer. Mg(2+) is required as a cofactor.

The protein localises to the cytoplasm. It catalyses the reaction a 2'-deoxyribonucleoside 5'-diphosphate + ATP = a 2'-deoxyribonucleoside 5'-triphosphate + ADP. It carries out the reaction a ribonucleoside 5'-diphosphate + ATP = a ribonucleoside 5'-triphosphate + ADP. Its function is as follows. Major role in the synthesis of nucleoside triphosphates other than ATP. The ATP gamma phosphate is transferred to the NDP beta phosphate via a ping-pong mechanism, using a phosphorylated active-site intermediate. In Leptospira borgpetersenii serovar Hardjo-bovis (strain L550), this protein is Nucleoside diphosphate kinase.